The primary structure comprises 127 residues: MATRRNPTKESITTSPPPDQQPRQPGELEHREAIQLRDLPGYPQQVLWKLIIYSIAVLVLPLSAYFYSVNYVFDGNTTYAGATAAITANLILFSYIVVAMREDKGDQEQLREQQQLRGNKEETKKMK.

A disordered region spans residues 1 to 28; it reads MATRRNPTKESITTSPPPDQQPRQPGEL. At 1–45 the chain is on the cytoplasmic side; the sequence is MATRRNPTKESITTSPPPDQQPRQPGELEHREAIQLRDLPGYPQQ. A helical membrane pass occupies residues 46 to 66; that stretch reads VLWKLIIYSIAVLVLPLSAYF. At 67-79 the chain is on the lumenal side; the sequence is YSVNYVFDGNTTY. The chain crosses the membrane as a helical span at residues 80 to 100; the sequence is AGATAAITANLILFSYIVVAM. Over 101–127 the chain is Cytoplasmic; sequence REDKGDQEQLREQQQLRGNKEETKKMK. The interval 107–127 is disordered; that stretch reads QEQLREQQQLRGNKEETKKMK. The span at 118 to 127 shows a compositional bias: basic and acidic residues; the sequence is GNKEETKKMK. The Prevents secretion from ER signature appears at 124-127; it reads KKMK.

The protein belongs to the VMA21 family.

It is found in the endoplasmic reticulum membrane. The protein localises to the endoplasmic reticulum-Golgi intermediate compartment membrane. Its subcellular location is the cytoplasmic vesicle. It localises to the COPII-coated vesicle membrane. Functionally, required for the assembly of the V0 complex of the vacuolar ATPase (V-ATPase) in the endoplasmic reticulum. The sequence is that of Vacuolar ATPase assembly integral membrane protein VMA21 from Coccidioides immitis (strain RS) (Valley fever fungus).